A 180-amino-acid polypeptide reads, in one-letter code: Threonylcarbamoyl-AMP synthase (180 aa).

In terms of domain architecture, YrdC-like spans 1–180; the sequence is MRARALQHFL…DLITGAIVRP (180 aa).

The protein belongs to the SUA5 family. TsaC subfamily.

It is found in the cytoplasm. It carries out the reaction L-threonine + hydrogencarbonate + ATP = L-threonylcarbamoyladenylate + diphosphate + H2O. Functionally, required for the formation of a threonylcarbamoyl group on adenosine at position 37 (t(6)A37) in tRNAs that read codons beginning with adenine. Catalyzes the conversion of L-threonine, HCO(3)(-)/CO(2) and ATP to give threonylcarbamoyl-AMP (TC-AMP) as the acyladenylate intermediate, with the release of diphosphate. The sequence is that of Threonylcarbamoyl-AMP synthase from Methylobacillus flagellatus (strain ATCC 51484 / DSM 6875 / VKM B-1610 / KT).